The sequence spans 1345 residues: DNA-directed RNA polymerase subunit beta (1345 aa).

Belongs to the RNA polymerase beta chain family. As to quaternary structure, the RNAP catalytic core consists of 2 alpha, 1 beta, 1 beta' and 1 omega subunit. When a sigma factor is associated with the core the holoenzyme is formed, which can initiate transcription.

The catalysed reaction is RNA(n) + a ribonucleoside 5'-triphosphate = RNA(n+1) + diphosphate. Its function is as follows. DNA-dependent RNA polymerase catalyzes the transcription of DNA into RNA using the four ribonucleoside triphosphates as substrates. The sequence is that of DNA-directed RNA polymerase subunit beta from Shewanella sp. (strain MR-4).